Here is a 722-residue protein sequence, read N- to C-terminus: Polyribonucleotide nucleotidyltransferase (722 aa).

Mg(2+) contacts are provided by Asp498 and Asp504. In terms of domain architecture, KH spans 565–624; the sequence is PQFHTMKIDPDKIRDIIGKGGATIRSITEETGASIDIDDNGTIKIYADDGDGMQAAIARI. In terms of domain architecture, S1 motif spans 634-702; sequence GAVYQGKVVR…QRGRIKLSIK (69 aa).

The protein belongs to the polyribonucleotide nucleotidyltransferase family. Component of the RNA degradosome, which is a multiprotein complex involved in RNA processing and mRNA degradation. Mg(2+) serves as cofactor.

It is found in the cytoplasm. It catalyses the reaction RNA(n+1) + phosphate = RNA(n) + a ribonucleoside 5'-diphosphate. Its function is as follows. Involved in mRNA degradation. Catalyzes the phosphorolysis of single-stranded polyribonucleotides processively in the 3'- to 5'-direction. This chain is Polyribonucleotide nucleotidyltransferase, found in Saccharophagus degradans (strain 2-40 / ATCC 43961 / DSM 17024).